A 98-amino-acid chain; its full sequence is Integration host factor subunit beta (98 aa).

The protein belongs to the bacterial histone-like protein family. As to quaternary structure, heterodimer of an alpha and a beta chain.

Functionally, this protein is one of the two subunits of integration host factor, a specific DNA-binding protein that functions in genetic recombination as well as in transcriptional and translational control. In Gluconacetobacter diazotrophicus (strain ATCC 49037 / DSM 5601 / CCUG 37298 / CIP 103539 / LMG 7603 / PAl5), this protein is Integration host factor subunit beta.